The following is a 126-amino-acid chain: MQYMTIVAFLAATVAAGPQIRAYPSIDQITVAQANNACGNNMQVTCCNKVTNTPAGNAVGNGAGILNNLSLFDQCSKLDVNVLAIANGLLNKECQANAACCQNSGGSATGGLVNVALPCIALSSLI.

Positions 1–16 (MQYMTIVAFLAATVAA) are cleaved as a signal peptide. Disulfide bonds link C38–C100, C46–C94, C47–C75, and C101–C119.

This sequence belongs to the fungal hydrophobin family.

It is found in the secreted. The protein localises to the cell wall. Its function is as follows. Aerial growth, conidiation, and dispersal of filamentous fungi in the environment rely upon a capability of their secreting small amphipathic proteins called hydrophobins (HPBs) with low sequence identity. Class I can self-assemble into an outermost layer of rodlet bundles on aerial cell surfaces, conferring cellular hydrophobicity that supports fungal growth, development and dispersal; whereas Class II form highly ordered films at water-air interfaces through intermolecular interactions but contribute nothing to the rodlet structure. HYD1 and HYD2 are required for the structural integrity of the long aerial chains of microconidia. Does not seem to be important for the ability to cause seedling disease. This chain is Class I hydrophobin 1, found in Gibberella moniliformis (Maize ear and stalk rot fungus).